The primary structure comprises 205 residues: Glycerol-3-phosphate acyltransferase (205 aa).

At 1–3 the chain is on the periplasmic side; the sequence is MSA. The chain crosses the membrane as a helical span at residues 4–24; it reads IAPGMILFAYLCGSISSAILV. The Cytoplasmic portion of the chain corresponds to 25 to 52; it reads CRIAGLPDPRESGSGNPGATNVLRIGGK. The helical transmembrane segment at 53 to 73 threads the bilayer; that stretch reads GAAVAVLIFDILKGMLPVWGA. Topologically, residues 74–80 are periplasmic; that stretch reads YALGVTP. The helical transmembrane segment at 81–101 threads the bilayer; that stretch reads FWLGLIAIAACLGHIWPVFFG. Residues 102–111 lie on the Cytoplasmic side of the membrane; that stretch reads FKGGKGVATA. Residues 112-132 form a helical membrane-spanning segment; it reads FGAIAPIGWDLTGVMAGTWLL. At 133–137 the chain is on the periplasmic side; it reads TVLLS. The helical transmembrane segment at 138 to 158 threads the bilayer; it reads GYSSLGAIVSALIAPFYVWWF. Over 159 to 205 the chain is Cytoplasmic; sequence KPQFTFPVSMLSCLILLRHHDNIQRLWRRQETKIWTKLKKKRQKDSE.

The protein belongs to the PlsY family. In terms of assembly, probably interacts with PlsX.

The protein resides in the cell inner membrane. It catalyses the reaction sn-glycerol 3-phosphate + an acyl-CoA = a 1-acyl-sn-glycero-3-phosphate + CoA. The catalysed reaction is a fatty acyl-[ACP] + sn-glycerol 3-phosphate = a 1-acyl-sn-glycero-3-phosphate + holo-[ACP]. It functions in the pathway lipid metabolism; phospholipid metabolism. Its function is as follows. Catalyzes the transfer of an acyl group from acyl-ACP to glycerol-3-phosphate (G3P) to form lysophosphatidic acid (LPA). This enzyme can also utilize acyl-CoA as fatty acyl donor, but not acyl-PO(4). The polypeptide is Glycerol-3-phosphate acyltransferase (Salmonella schwarzengrund (strain CVM19633)).